The sequence spans 521 residues: Alkyl hydroperoxide reductase subunit F (521 aa).

Position 213-228 (213-228) interacts with FAD; that stretch reads DVLVVGGGPAGAAAAI. Residues cysteine 344 and cysteine 347 are joined by a disulfide bond. 356-370 lines the NAD(+) pocket; it reads RVAVIGGGNSGVEAA. 477-487 serves as a coordination point for FAD; the sequence is TSLPGIFAAGD.

This sequence belongs to the class-II pyridine nucleotide-disulfide oxidoreductase family. Homodimer. It depends on FAD as a cofactor.

In terms of biological role, serves to protect the cell against DNA damage by alkyl hydroperoxides. It can use either NADH or NADPH as electron donor for direct reduction of redox dyes or of alkyl hydroperoxides when combined with the AhpC protein. The protein is Alkyl hydroperoxide reductase subunit F (ahpF) of Pseudomonas aeruginosa (strain ATCC 15692 / DSM 22644 / CIP 104116 / JCM 14847 / LMG 12228 / 1C / PRS 101 / PAO1).